The primary structure comprises 611 residues: MIIRHLSENIINQIAAGEVIERPANVIKELVENAIDAQATRIEISIVNGGKNFIRVSDNGCGIPADQLTLAVSRHCTSKIVDDVSNICFLGFRGEALPSIGSVAKLKLTSRTQDADNANEISVIAGKIEGPKPAAANPGTIVEVRDLFFVTPARLKFMKTDRAETSAITDMIKRIAIAFPHIRFSLSSTDRMLMEFPATENNTQGQLQRITQIMGKEFAPNSIALNAERESVRLTGFTCLPSFNRSNSLHQFAYVNGRPVRDKLLWGAIRGAYADAIARDRHAVSIIFIDLPPADVDVNVHPTKADVRFRDPGLIRGLIIGAIHEALHQAGVRHTSTHSESVLTAFQIHPLENLKSAQRPFSYTSQPYHRVSTTTSMLQKPLDDSIDLREGIVPMMECLSAPSSDTRATIQTSPTEELHYPLGAAKAQIHKNYIISQTQDSLIIVDQHAAHERLVYEALKNALYSKPLSSQLLLIPEIVELSEEDAACLLTHKDSLQKFGLGIEPFGPGAILVRETPAMLGEINAQALIKDLADEAAEYDTTNNLKAMLDYVAATMACHSSVRSGRLLRPEEMNALLRQIEETPHSSTCNHGRPTYIELKLADIERLFGRK.

It belongs to the DNA mismatch repair MutL/HexB family.

In terms of biological role, this protein is involved in the repair of mismatches in DNA. It is required for dam-dependent methyl-directed DNA mismatch repair. May act as a 'molecular matchmaker', a protein that promotes the formation of a stable complex between two or more DNA-binding proteins in an ATP-dependent manner without itself being part of a final effector complex. This is DNA mismatch repair protein MutL from Bartonella bacilliformis (strain ATCC 35685 / KC583 / Herrer 020/F12,63).